We begin with the raw amino-acid sequence, 331 residues long: Geranylgeranyl pyrophosphate synthase dpmaD (331 aa).

Residues Lys53, Arg56, and His85 each coordinate isopentenyl diphosphate. Mg(2+) contacts are provided by Asp92 and Asp96. Arg101 is a dimethylallyl diphosphate binding site. Arg102 contributes to the isopentenyl diphosphate binding site. 3 residues coordinate dimethylallyl diphosphate: Lys179, Thr180, and Gln213. Asp216 provides a ligand contact to Mg(2+). Asn220, Lys230, and Lys240 together coordinate dimethylallyl diphosphate.

The protein belongs to the FPP/GGPP synthase family. Requires Mg(2+) as cofactor.

It catalyses the reaction isopentenyl diphosphate + dimethylallyl diphosphate = (2E)-geranyl diphosphate + diphosphate. It carries out the reaction isopentenyl diphosphate + (2E)-geranyl diphosphate = (2E,6E)-farnesyl diphosphate + diphosphate. The enzyme catalyses isopentenyl diphosphate + (2E,6E)-farnesyl diphosphate = (2E,6E,10E)-geranylgeranyl diphosphate + diphosphate. Its pathway is secondary metabolite biosynthesis; terpenoid biosynthesis. Its function is as follows. Geranylgeranyl pyrophosphate synthase; part of the gene cluster that mediates the biosynthesis of the diterpenoid pyrones subglutinols A and B. The first step of the pathway is the synthesis of the alpha-pyrone moiety by the polyketide synthase dpmaA via condensation of one acetyl-CoA starter unit with 3 malonyl-CoA units and 2 methylations. The alpha-pyrone is then combined with geranylgeranyl pyrophosphate (GGPP) formed by the GGPP synthase dpmaD through the action of the prenyltransferase dpmaC to yield a linear alpha-pyrone diterpenoid. Subsequent steps in the diterpenoid pyrone biosynthetic pathway involve the decalin core formation, which is initiated by the epoxidation of the C10-C11 olefin by the FAD-dependent oxidoreductase dpmaE, and is followed by a cyclization cascade catalyzed by the terpene cyclase dpmaB. The dehydrogenase dpmaF is then involved in tetrahydrofuran (THF) ring formation at the C5 unit to complete the formation of subglutinols A and B. This chain is Geranylgeranyl pyrophosphate synthase dpmaD, found in Metarhizium anisopliae (Entomophthora anisopliae).